Reading from the N-terminus, the 184-residue chain is Endoribonuclease YbeY (184 aa).

Positions 118, 122, and 128 each coordinate Zn(2+).

Belongs to the endoribonuclease YbeY family. The cofactor is Zn(2+).

Its subcellular location is the cytoplasm. Its function is as follows. Single strand-specific metallo-endoribonuclease involved in late-stage 70S ribosome quality control and in maturation of the 3' terminus of the 16S rRNA. This is Endoribonuclease YbeY from Nocardia farcinica (strain IFM 10152).